Here is a 374-residue protein sequence, read N- to C-terminus: Glutamate 5-kinase (374 aa).

An ATP-binding site is contributed by Lys8. The substrate site is built by Ser49, Asp136, and Asn148. ATP contacts are provided by residues 168-169 and 211-217; these read TD and TGGMQTK. The region spanning 276–354 is the PUA domain; that stretch reads QGILTLDDGA…TQIRQILGYG (79 aa).

The protein belongs to the glutamate 5-kinase family.

Its subcellular location is the cytoplasm. The enzyme catalyses L-glutamate + ATP = L-glutamyl 5-phosphate + ADP. It functions in the pathway amino-acid biosynthesis; L-proline biosynthesis; L-glutamate 5-semialdehyde from L-glutamate: step 1/2. Catalyzes the transfer of a phosphate group to glutamate to form L-glutamate 5-phosphate. In Picosynechococcus sp. (strain ATCC 27264 / PCC 7002 / PR-6) (Agmenellum quadruplicatum), this protein is Glutamate 5-kinase.